A 617-amino-acid chain; its full sequence is uncharacterized protein (617 aa).

The chain crosses the membrane as a helical span at residues 103–123 (AGVLLAKFFPLLFLYPLTYLA). The 410-residue stretch at 200–609 (FETREPVGSG…DILEAAKPFL (410 aa)) folds into the Protein kinase domain. ATP contacts are provided by residues 206–214 (VGSGCVAQV) and K302. Residue D436 is the Proton acceptor of the active site.

This sequence belongs to the protein kinase superfamily. ADCK protein kinase family.

It is found in the mitochondrion. Its subcellular location is the membrane. Functionally, the function of this protein is not yet clear. It is not known if it has protein kinase activity and what type of substrate it would phosphorylate (Ser, Thr or Tyr). Involved in the mitochondrial import of CoQ precursors, plays a role in muscle mitochondrial function and fatty acid beta-oxidation. This is an uncharacterized protein from Mus musculus (Mouse).